The sequence spans 536 residues: B3 domain-containing protein Os03g0619800 (536 aa).

The TF-B3 1 DNA-binding region spans 26 to 119 (MRCFLRRMAA…RYEVLILDSD (94 aa)). Residues 138–199 (DKTVDPVDSS…VEPQTPSGSD (62 aa)) are disordered. Composition is skewed to low complexity over residues 145 to 160 (DSSGSSSNDTTQSSRS) and 171 to 183 (SSSEKSGEDSPSG). Residues 231 to 330 (VAVMKKCNLQ…AFTVHLLQAE (100 aa)) constitute a DNA-binding region (TF-B3 2). A disordered region spans residues 335-396 (RDGTDVHKIG…SDGPSEPPYI (62 aa)). Over residues 344–355 (GSSQNKRNSKMA) the composition is skewed to polar residues. The span at 372–382 (SNKHGVSHESL) shows a compositional bias: basic and acidic residues. Residues 429 to 529 (ISKLAGSGGK…TMEVHIISNL (101 aa)) constitute a DNA-binding region (TF-B3 3).

Its subcellular location is the nucleus. In Oryza sativa subsp. japonica (Rice), this protein is B3 domain-containing protein Os03g0619800.